A 288-amino-acid chain; its full sequence is ATP synthase gamma chain (288 aa).

Belongs to the ATPase gamma chain family. As to quaternary structure, F-type ATPases have 2 components, CF(1) - the catalytic core - and CF(0) - the membrane proton channel. CF(1) has five subunits: alpha(3), beta(3), gamma(1), delta(1), epsilon(1). CF(0) has three main subunits: a, b and c.

It localises to the cell inner membrane. Its function is as follows. Produces ATP from ADP in the presence of a proton gradient across the membrane. The gamma chain is believed to be important in regulating ATPase activity and the flow of protons through the CF(0) complex. The chain is ATP synthase gamma chain from Blochmanniella pennsylvanica (strain BPEN).